The chain runs to 346 residues: Probable aldo-keto reductase 2 (346 aa).

The active-site Proton donor is tyrosine 63. Histidine 131 contributes to the substrate binding site. 210–220 provides a ligand contact to NADP(+); that stretch reads SPLGRGFLAAG.

Belongs to the aldo/keto reductase family. Aldo/keto reductase 13 subfamily.

The polypeptide is Probable aldo-keto reductase 2 (AGD2) (Arabidopsis thaliana (Mouse-ear cress)).